A 711-amino-acid polypeptide reads, in one-letter code: Polyribonucleotide nucleotidyltransferase (711 aa).

Asp486 and Asp492 together coordinate Mg(2+). Residues Pro553–Ile612 enclose the KH domain. The S1 motif domain occupies Gly622–Lys690. Positions Lys690–Glu711 are disordered. The span at Pro698 to Glu711 shows a compositional bias: low complexity.

It belongs to the polyribonucleotide nucleotidyltransferase family. In terms of assembly, component of the RNA degradosome, which is a multiprotein complex involved in RNA processing and mRNA degradation. Mg(2+) serves as cofactor.

Its subcellular location is the cytoplasm. The catalysed reaction is RNA(n+1) + phosphate = RNA(n) + a ribonucleoside 5'-diphosphate. Its function is as follows. Involved in mRNA degradation. Catalyzes the phosphorolysis of single-stranded polyribonucleotides processively in the 3'- to 5'-direction. This is Polyribonucleotide nucleotidyltransferase from Escherichia coli O127:H6 (strain E2348/69 / EPEC).